A 463-amino-acid polypeptide reads, in one-letter code: Interstitial collagenase B (463 aa).

The N-terminal stretch at 1–17 (MPSLPLLLRLWAASSYS) is a signal peptide. Residues 18-96 (FPVIQDGLQK…PRCGVPDVAP (79 aa)) constitute a propeptide, activation peptide. The Cysteine switch motif lies at 87–94 (PRCGVPDV). C89 is a binding site for Zn(2+). The segment at 95-273 (APYAITHNNP…PIQLTDATLD (179 aa)) is metalloprotease. D155 contributes to the Ca(2+) binding site. Residues H165 and D167 each coordinate Zn(2+). Ca(2+) is bound by residues D172 and G173. H180 contacts Zn(2+). Positions 187 and 189 each coordinate Ca(2+). Residue H193 coordinates Zn(2+). D195 is a Ca(2+) binding site. H215 contributes to the Zn(2+) binding site. The active site involves E216. Zn(2+)-binding residues include H219 and H225. C275 and C463 are disulfide-bonded. Hemopexin repeat units lie at residues 278 to 321 (GLTF…WPNL) and 322 to 368 (PGKF…FGFP). Position 282 (D282) interacts with Ca(2+). N370 carries N-linked (GlcNAc...) asparagine glycosylation. Hemopexin repeat units follow at residues 371–419 (VTNI…FPGI) and 420–463 (DYKV…WFNC). 2 residues coordinate Ca(2+): D375 and D424.

It belongs to the peptidase M10A family. Requires Ca(2+) as cofactor. The cofactor is Zn(2+).

Its subcellular location is the secreted. It localises to the extracellular space. It is found in the extracellular matrix. It carries out the reaction Cleavage of the triple helix of collagen at about three-quarters of the length of the molecule from the N-terminus, at 775-Gly-|-Ile-776 in the alpha1(I) chain. Cleaves synthetic substrates and alpha-macroglobulins at bonds where P1' is a hydrophobic residue.. Its activity is regulated as follows. Can be activated without removal of the activation peptide. The chain is Interstitial collagenase B (Mmp1b) from Mus musculus (Mouse).